We begin with the raw amino-acid sequence, 519 residues long: 3-octaprenyl-4-hydroxybenzoate carboxy-lyase (519 aa).

Asn177 contributes to the Mn(2+) binding site. Prenylated FMN contacts are provided by residues 180 to 182 (IYR), 194 to 196 (RWL), and 199 to 200 (RG). Glu243 serves as a coordination point for Mn(2+). Asp318 (proton donor) is an active-site residue.

Belongs to the UbiD family. In terms of assembly, homohexamer. Prenylated FMN is required as a cofactor. It depends on Mn(2+) as a cofactor.

The protein localises to the cell membrane. It carries out the reaction a 4-hydroxy-3-(all-trans-polyprenyl)benzoate + H(+) = a 2-(all-trans-polyprenyl)phenol + CO2. It participates in cofactor biosynthesis; ubiquinone biosynthesis. Functionally, catalyzes the decarboxylation of 3-octaprenyl-4-hydroxy benzoate to 2-octaprenylphenol, an intermediate step in ubiquinone biosynthesis. The chain is 3-octaprenyl-4-hydroxybenzoate carboxy-lyase from Burkholderia pseudomallei (strain 1710b).